Reading from the N-terminus, the 186-residue chain is Ribosome rescue factor SmrB (186 aa).

The region spanning 99–174 is the Smr domain; sequence IDLHGLTQHQ…SDAAIIVIIE (76 aa).

It belongs to the SmrB family. Associates with collided ribosomes, but not with correctly translating polysomes.

Its function is as follows. Acts as a ribosome collision sensor. Detects stalled/collided disomes (pairs of ribosomes where the leading ribosome is stalled and a second ribosome has collided with it) and endonucleolytically cleaves mRNA at the 5' boundary of the stalled ribosome. Stalled/collided disomes form a new interface (primarily via the 30S subunits) that binds SmrB. Cleaved mRNA becomes available for tmRNA ligation, leading to ribosomal subunit dissociation and rescue of stalled ribosomes. This is Ribosome rescue factor SmrB from Buchnera aphidicola subsp. Acyrthosiphon pisum (strain 5A).